The chain runs to 430 residues: MGKNVVVLGTQWGDEGKGKIVDLLTEQAAAVVRYQGGHNAGHTLVIDGEKTVLHLIPSGILREGVQCLIGNGVVLAPDALLREITKLEEKGVPVRERLRISPSCPLILSYHVALDQAREKARGEAKIGTTGRGIGPAYEDKVARRGLRVGDLFHRERFAAKLGELLDYHNFVLQHYYKEPAIDFQKTLDEAMEYAELLKPMMADVAATLHDLRKHGKDIMFEGAQGSLLDIDHGTYPYVTSSNTTAGGTATGSGFGPLYLDYVLGITKAYTTRVGSGPFPTELFDDVGAYLAKRGHEFGATTGRARRCGWFDAVILRRAIEINSISGLCLTKLDVLDGLDVVRLCVGYRNADGDVLEAPTDADSYIGLQPVYEEMPGWSESTVGAKTLEELPANARAYIKRVEELVGAPIDIISTGPDRNETIILRHPFA.

GTP is bound by residues 13-19 and 41-43; these read GDEGKGK and GHT. D14 (proton acceptor) is an active-site residue. 2 residues coordinate Mg(2+): D14 and G41. Residues 14-17, 39-42, T130, R144, Q225, T240, and R304 each bind IMP; these read DEGK and NAGH. The active-site Proton donor is the H42. Position 300–306 (300–306) interacts with substrate; sequence ATTGRAR. GTP-binding positions include R306, 332–334, and 414–416; these read KLD and STG.

Belongs to the adenylosuccinate synthetase family. As to quaternary structure, homodimer. Mg(2+) serves as cofactor.

The protein resides in the cytoplasm. The enzyme catalyses IMP + L-aspartate + GTP = N(6)-(1,2-dicarboxyethyl)-AMP + GDP + phosphate + 2 H(+). Its pathway is purine metabolism; AMP biosynthesis via de novo pathway; AMP from IMP: step 1/2. Plays an important role in the de novo pathway of purine nucleotide biosynthesis. Catalyzes the first committed step in the biosynthesis of AMP from IMP. The protein is Adenylosuccinate synthetase of Pseudomonas paraeruginosa (strain DSM 24068 / PA7) (Pseudomonas aeruginosa (strain PA7)).